Reading from the N-terminus, the 73-residue chain is Sec-independent protein translocase protein TatA (73 aa).

Residues methionine 1–glycine 21 traverse the membrane as a helical segment. The segment at lysine 50–lysine 73 is disordered. Residues lysine 62 to lysine 73 show a composition bias toward basic and acidic residues.

This sequence belongs to the TatA/E family. As to quaternary structure, the Tat system comprises two distinct complexes: a TatABC complex, containing multiple copies of TatA, TatB and TatC subunits, and a separate TatA complex, containing only TatA subunits. Substrates initially bind to the TatABC complex, which probably triggers association of the separate TatA complex to form the active translocon.

The protein resides in the cell inner membrane. Its function is as follows. Part of the twin-arginine translocation (Tat) system that transports large folded proteins containing a characteristic twin-arginine motif in their signal peptide across membranes. TatA could form the protein-conducting channel of the Tat system. The chain is Sec-independent protein translocase protein TatA from Polynucleobacter necessarius subsp. necessarius (strain STIR1).